Consider the following 379-residue polypeptide: Citrate synthase (379 aa).

Residues His225, His265, and Asp316 contribute to the active site.

This sequence belongs to the citrate synthase family. Homodimer.

It catalyses the reaction oxaloacetate + acetyl-CoA + H2O = citrate + CoA + H(+). It functions in the pathway carbohydrate metabolism; tricarboxylic acid cycle; isocitrate from oxaloacetate: step 1/2. Functionally, might regulate the synthesis and function of enzymes involved in later enzymatic steps of Krebs cycle. This Haloferax volcanii (strain ATCC 29605 / DSM 3757 / JCM 8879 / NBRC 14742 / NCIMB 2012 / VKM B-1768 / DS2) (Halobacterium volcanii) protein is Citrate synthase (citZ).